Here is a 260-residue protein sequence, read N- to C-terminus: Cobalt transport protein CbiM (260 aa).

The signal sequence occupies residues 1-34; that stretch reads MKLGESMKKNATLSVKIIAFLGVLIFTVMPVANA. Helical transmembrane passes span 39–59, 77–97, 109–129, 132–152, 175–195, and 215–235; these read EGYLSPKWCIIWGILVLPFLI, LLFAMAGAFIFILSALKLPSF, LSTILFGPAITTVLGVIVLLF, LLLAHGGISTLGANSFAMAVM, IFFSATVGDLFTYCITAIQLG, and VFAITQIPIAIAEGILTVLIF.

Belongs to the CbiM family. In terms of assembly, forms an energy-coupling factor (ECF) transporter complex composed of an ATP-binding protein (A component, CbiO), a transmembrane protein (T component, CbiQ) and 2 possible substrate-capture proteins (S components, CbiM and CbiN) of unknown stoichimetry.

The protein resides in the cell membrane. It participates in cofactor biosynthesis; adenosylcobalamin biosynthesis. Part of the energy-coupling factor (ECF) transporter complex CbiMNOQ involved in cobalt import. This Clostridium cellulovorans (strain ATCC 35296 / DSM 3052 / OCM 3 / 743B) protein is Cobalt transport protein CbiM.